The chain runs to 224 residues: MKIYGIYMDRPLSQEETDRLMSFVSAEKREKCRRFYHKEDAHRTLLGDVLVRSVISEQYQLNKADIRFSAQEYGKPCIPDLPNAHFNISHSGHWVIGAFDSDPIGVDIEKMKPISLGIAERFFSKNEYSDLLSKHKDEQNDYFYHLWSMKESFIKQEGKGLSLPLDSFSVRLHEDGRVSVELPEHHTPCFIKTYEVDPGYKMAVCAARPDFPEDITMISYEALL.

D107, E109, and E151 together coordinate Mg(2+). Positions 158 to 189 are peptidyl carrier protein binding; that stretch reads GKGLSLPLDSFSVRLHEDGRVSVELPEHHTPC.

The protein belongs to the P-Pant transferase superfamily. Gsp/Sfp/HetI/AcpT family. Requires Mg(2+) as cofactor.

It catalyses the reaction apo-[peptidyl-carrier protein] + CoA = holo-[peptidyl-carrier protein] + adenosine 3',5'-bisphosphate + H(+). In terms of biological role, may activate the peptidyl carrier protein (PCP) domains of fengycin synthase by transferring the 4'-phosphopantetheinyl moiety of coenzyme A (CoA) to a serine residue. This chain is 4'-phosphopantetheinyl transferase ffp (ffp), found in Bacillus subtilis.